Consider the following 247-residue polypeptide: ATP synthase subunit a, chloroplastic (247 aa).

5 helical membrane-spanning segments follow: residues 38 to 58 (QVLITSWVVIAILLGSVIIAV), 95 to 115 (VPFIGTMFLFIFVSNWSGALL), 134 to 154 (INTTVALALPTSVAYFYAGLT), 199 to 219 (LVVVVLVSLVPSLVPIPVMFL), and 220 to 240 (GLFTSGIQALIFATLAAAYIG).

It belongs to the ATPase A chain family. In terms of assembly, F-type ATPases have 2 components, CF(1) - the catalytic core - and CF(0) - the membrane proton channel. CF(1) has five subunits: alpha(3), beta(3), gamma(1), delta(1), epsilon(1). CF(0) has four main subunits: a, b, b' and c.

The protein localises to the plastid. It localises to the chloroplast thylakoid membrane. Its function is as follows. Key component of the proton channel; it plays a direct role in the translocation of protons across the membrane. This Dioscorea elephantipes (Elephant's foot yam) protein is ATP synthase subunit a, chloroplastic.